The chain runs to 1218 residues: DNA polymerase subunit gamma-1 (1218 aa).

The disordered stretch occupies residues 31–50; the sequence is LDPVPSDGRPPSQMPSSENG. The short motif at 179 to 183 is the Exo I element; the sequence is VFDVE. The Exonuclease activity role is filled by aspartate 181. Positions 250–258 match the Exo II motif; the sequence is VGHNVSFDR. Residue serine 289 participates in DNA binding. An Exo III motif is present at residues 378 to 386; sequence YCARDVWAT. Positions 484-524 are disordered; sequence KKVKKPASASKLPIEGAGPFGDPMDQEDPGPPSEEEELQRS. The segment at 492–553 is accessory-interacting determinant; it reads ASKLPIEGAG…RPQHLPGHPG (62 aa). Over residues 507–520 the composition is skewed to acidic residues; that stretch reads MDQEDPGPPSEEEE. Arginine 561 contacts RNA. DNA is bound at residue serine 575. Residues histidine 733, glycine 742, and lysine 747 each coordinate RNA. DNA contacts are provided by lysine 785 and threonine 828. Residues 837–843 form a trigger loop region; sequence TWLTASN. The RNA site is built by serine 842 and arginine 848. The short motif at 866 to 875 is the Pol A element; it reads VGADVDSQEL. Aspartate 869, valine 870, serine 872, glutamate 874, arginine 922, lysine 926, and tyrosine 930 together coordinate a 2'-deoxyribonucleoside 5'-triphosphate. Mg(2+) is bound by residues aspartate 869 and valine 870. The Pol B signature appears at 922–937; the sequence is REHAKIFNYGRIYGAG. The DNA site is built by threonine 1073 and serine 1074. The Pol C motif lies at 1113 to 1120; the sequence is HDEVRYLV. An a 2'-deoxyribonucleoside 5'-triphosphate-binding site is contributed by aspartate 1114. Aspartate 1114 serves as a coordination point for Mg(2+).

The protein belongs to the DNA polymerase type-A family. Heterotrimer composed of a catalytic subunit and a homodimer of accessory subunits (POLG:POLG2). Interacts with TTC3. Interacts with LIG3. Mg(2+) is required as a cofactor.

The protein localises to the mitochondrion. Its subcellular location is the mitochondrion matrix. The protein resides in the mitochondrion nucleoid. The enzyme catalyses DNA(n) + a 2'-deoxyribonucleoside 5'-triphosphate = DNA(n+1) + diphosphate. It catalyses the reaction a 3'-end 2'-deoxyribonucleotidyl-deoxyribonucleotide-DNA + H2O = a 3'-end 2'-deoxyribonucleotide-DNA + a 2'-deoxyribonucleoside 5'-phosphate + H(+). It carries out the reaction a 5'-end 2'-deoxyribose-2'-deoxyribonucleotide-DNA = (2E,4S)-4-hydroxypenten-2-al-5-phosphate + a 5'-end 5'-phospho-2'-deoxyribonucleoside-DNA + H(+). Its activity is regulated as follows. Inhibited by dideoxynucleotides such as antiviral agent zalcitabine. Catalytic subunit of DNA polymerase gamma solely responsible for replication of mitochondrial DNA (mtDNA). Replicates both heavy and light strands of the circular mtDNA genome using a single-stranded DNA template, RNA primers and the four deoxyribonucleoside triphosphates as substrates. Has 5' -&gt; 3' polymerase activity. Functionally interacts with TWNK and SSBP1 at the replication fork to form a highly processive replisome, where TWNK unwinds the double-stranded DNA template prior to replication and SSBP1 covers the parental heavy strand to enable continuous replication of the entire mitochondrial genome. A single nucleotide incorporation cycle includes binding of the incoming nucleotide at the insertion site, a phosphodiester bond formation reaction that extends the 3'-end of the primer DNA, and translocation of the primer terminus to the post-insertion site. After completing replication of a mtDNA strand, mediates 3' -&gt; 5' exonucleolytic degradation at the nick to enable proper ligation. Highly accurate due to high nucleotide selectivity and 3' -&gt; 5' exonucleolytic proofreading. Proficiently corrects base substitutions, single-base additions and deletions in non-repetitive sequences and short repeats, but displays lower proofreading activity when replicating longer homopolymeric stretches. Exerts exonuclease activity toward single-stranded DNA and double-stranded DNA containing 3'-terminal mispairs. When a misincorporation occurs, transitions from replication to a pro-nucleolytic editing mode and removes the missincorporated nucleoside in the exonuclease active site. Proceeds via an SN2 nucleolytic mechanism in which Asp-198 catalyzes phosphodiester bond hydrolysis and Glu-200 stabilizes the leaving group. As a result the primer strand becomes one nucleotide shorter and is positioned in the post-insertion site, ready to resume DNA synthesis. Exerts 5'-deoxyribose phosphate (dRP) lyase activity and mediates repair-associated mtDNA synthesis (gap filling) in base-excision repair pathway. Catalyzes the release of the 5'-terminal 2-deoxyribose-5-phosphate sugar moiety from incised apurinic/apyrimidinic (AP) sites to produce a substrate for DNA ligase. The dRP lyase reaction does not require divalent metal ions and likely proceeds via a Schiff base intermediate in a beta-elimination reaction mechanism. In Mus musculus (Mouse), this protein is DNA polymerase subunit gamma-1.